Consider the following 781-residue polypeptide: N-acetylneuraminate (7)9-O-acetyltransferase (781 aa).

Residues Met1–Gln15 are Cytoplasmic-facing. A helical membrane pass occupies residues Tyr16 to Phe36. Over His37–Lys308 the chain is Lumenal. Ser94 serves as the catalytic Acyl-ester intermediate. N-linked (GlcNAc...) asparagine glycans are attached at residues Asn139, Asn185, and Asn239. Active-site residues include Asp264 and His267. Residues Leu309 to His329 traverse the membrane as a helical segment. Residues Arg330 to Val350 form a disordered region. Topologically, residues Arg330–Asn354 are cytoplasmic. Residues Pro355 to Cys375 traverse the membrane as a helical segment. At Asp376 to Lys386 the chain is on the lumenal side. A helical transmembrane segment spans residues Phe387–Tyr407. The Cytoplasmic portion of the chain corresponds to Ser408–Gln430. A helical membrane pass occupies residues Leu431–Val451. Residue Arg452 is a topological domain, lumenal. A helical transmembrane segment spans residues Val453 to Lys473. Residues Gly474–Gly477 are Cytoplasmic-facing. Residues Leu478–Val498 traverse the membrane as a helical segment. At Met499–Gln504 the chain is on the lumenal side. A helical membrane pass occupies residues Phe505–Leu525. Topologically, residues Trp526 to Ser537 are cytoplasmic. A helical transmembrane segment spans residues Ala538 to Phe558. The Lumenal portion of the chain corresponds to Ala559 to Arg595. Residues Phe596–Leu616 traverse the membrane as a helical segment. Residues Leu617–Lys629 are Cytoplasmic-facing. The helical transmembrane segment at Ile630–Ser650 threads the bilayer. Residues Gly651–Glu660 are Lumenal-facing. Asn654 is a glycosylation site (N-linked (GlcNAc...) asparagine). A helical membrane pass occupies residues Met661–Ala681. Topologically, residues Arg682–Ser687 are cytoplasmic. Residues Phe688–Leu708 form a helical membrane-spanning segment. At Ala709–Gly714 the chain is on the lumenal side. Residues Ile715–Val735 form a helical membrane-spanning segment. Residues Cys736 to Glu756 lie on the Cytoplasmic side of the membrane. The helical transmembrane segment at Ser757 to Leu777 threads the bilayer. Residues Ser778–Asp781 are Lumenal-facing.

The protein belongs to the PC-esterase family. CASD1 subfamily.

It localises to the golgi apparatus membrane. It carries out the reaction CMP-N-acetyl-beta-neuraminate + acetyl-CoA = CMP-N-acetyl-9-O-acetyl-beta-neuraminate + CoA. It catalyses the reaction a ganglioside GD3 (d18:1(4E)) + acetyl-CoA = a ganglioside Ac-O-7-GD3(d18:1(4E)) + CoA. The catalysed reaction is CMP-N-acetyl-beta-neuraminate + acetyl-CoA = CMP-N-acetyl-7-O-acetyl-beta-neuraminate + CoA. Its function is as follows. Key enzyme in the biosynthesis of O-acetylated (O-Ac) sialoglycans such as gangliosides O-AcGD3 and O-AcGD2, which affect various processes such as cell-cell interactions, host-pathogen recognition. Catalyzes the transfer of an acetyl group from a donor, the acetyl-coenzyme-A molecule (acetyl-CoA), to the C7/8/9 OH-position of a sialic acid residue. The primary site of O-acetyl group transfer on sialic acid seems to depend on cell type and can be C7, from which the O-acetyl group could subsequently migrate to the C8 and then to the C9 position, or at C9 with possibility of migrating to the C8 and then to the C7 position. Together with ST8SIA1 (GD3 synthase) it increases the levels of ganglioside Ac-O-7-GD3. Can transfer the acetyl group from acetyl-CoA to free sialate (N-acetylneuraminate, Neu5Ac) in vitro, but has preferred substrate specificity for CMP-activated sialate (CMP-Neu5Ac), resulting in the formation of 9-O-acetylated CMP-Neu5Ac (CMP-Neu5,9Ac2). CMP-Neu5,9Ac2 may be used by sialyltransferases as a sialate donor for glycoconjugate acceptors such as ganglioside GD3. O-acetylation at position C9 of ganglioside GD3 can counteract the pro-apoptotic effects of the ganglioside GD3 in tumor cells. This is N-acetylneuraminate (7)9-O-acetyltransferase from Danio rerio (Zebrafish).